The chain runs to 525 residues: GMP synthase [glutamine-hydrolyzing] (525 aa).

Positions 13–202 (TILVLDFGSQ…AVEICQAAQT (190 aa)) constitute a Glutamine amidotransferase type-1 domain. The active-site Nucleophile is cysteine 89. Residues histidine 176 and glutamate 178 contribute to the active site. Residues 203–400 (WTMENFIDTE…LGISHELVWR (198 aa)) form the GMPS ATP-PPase domain. 231–237 (SGGVDST) is an ATP binding site. The XMP site is built by arginine 304, aspartate 462, lysine 517, and glutamate 523.

As to quaternary structure, homodimer. Requires Mg(2+) as cofactor.

Its subcellular location is the cytoplasm. It is found in the cytosol. It carries out the reaction XMP + L-glutamine + ATP + H2O = GMP + L-glutamate + AMP + diphosphate + 2 H(+). The protein operates within purine metabolism; GMP biosynthesis; GMP from XMP (L-Gln route): step 1/1. Its function is as follows. Catalyzes the conversion of xanthine monophosphate (XMP) to GMP in the presence of glutamine and ATP through an adenyl-XMP intermediate. The protein is GMP synthase [glutamine-hydrolyzing] (GUA1) of Eremothecium gossypii (strain ATCC 10895 / CBS 109.51 / FGSC 9923 / NRRL Y-1056) (Yeast).